We begin with the raw amino-acid sequence, 199 residues long: FMN-dependent NADH:quinone oxidoreductase 1 (199 aa).

FMN-binding positions include Ser-10, 17-19 (SNS), and 87-90 (MYNF).

This sequence belongs to the azoreductase type 1 family. As to quaternary structure, homodimer. The cofactor is FMN.

The catalysed reaction is 2 a quinone + NADH + H(+) = 2 a 1,4-benzosemiquinone + NAD(+). The enzyme catalyses N,N-dimethyl-1,4-phenylenediamine + anthranilate + 2 NAD(+) = 2-(4-dimethylaminophenyl)diazenylbenzoate + 2 NADH + 2 H(+). Quinone reductase that provides resistance to thiol-specific stress caused by electrophilic quinones. In terms of biological role, also exhibits azoreductase activity. Catalyzes the reductive cleavage of the azo bond in aromatic azo compounds to the corresponding amines. This chain is FMN-dependent NADH:quinone oxidoreductase 1, found in Mesoplasma florum (strain ATCC 33453 / NBRC 100688 / NCTC 11704 / L1) (Acholeplasma florum).